The sequence spans 403 residues: 26S proteasome regulatory subunit 6B homolog (403 aa).

M1 is modified (N-acetylmethionine). G191–T198 provides a ligand contact to ATP.

Belongs to the AAA ATPase family.

Its subcellular location is the cytoplasm. The protein localises to the nucleus. The 26S proteasome is involved in the ATP-dependent degradation of ubiquitinated proteins. The regulatory (or ATPase) complex confers ATP dependency and substrate specificity to the 26S complex. The protein is 26S proteasome regulatory subunit 6B homolog (psmC4) of Dictyostelium discoideum (Social amoeba).